We begin with the raw amino-acid sequence, 257 residues long: Type III pantothenate kinase (257 aa).

5 to 12 (DIGNTNIK) lines the ATP pocket. 107–110 (GSDR) is a substrate binding site. D109 functions as the Proton acceptor in the catalytic mechanism. T133 serves as a coordination point for ATP.

Belongs to the type III pantothenate kinase family. Homodimer. Requires NH4(+) as cofactor. K(+) serves as cofactor.

It is found in the cytoplasm. The catalysed reaction is (R)-pantothenate + ATP = (R)-4'-phosphopantothenate + ADP + H(+). It participates in cofactor biosynthesis; coenzyme A biosynthesis; CoA from (R)-pantothenate: step 1/5. In terms of biological role, catalyzes the phosphorylation of pantothenate (Pan), the first step in CoA biosynthesis. The sequence is that of Type III pantothenate kinase from Ehrlichia ruminantium (strain Gardel).